The primary structure comprises 372 residues: MRGIRDPRLIPIAEKVMEGKRLSFEDGLVLYQTKDLPTLMRLANLVRERKHGHKTYFVHSIRVSQTNICYVGCTFCAFQRRFGEEGAWDWDVDEVVAWVKERYQPGLTEIHLTAGHHPKRPFAYYLDLVRALKENFPGVQVKAWTAAEIHHFSKIARLPYREVLKALKEAGLDAMPGGGAEIFAERVRRKIARAKVSAEGWLEIHRTAHELGIPTNATMLYGHIETLEERLDHMDRLRRLQDETGGFMSFIPLAFQPDGNQLARELGKKEFTTGLDDLRNLAVARLYLDNFPHIKGYWATLTPELAQVSLDWGVTDVDGTLIEERIVHMAGSPTPQGLTKRELARIILMAGRIPVERDALYREVRVWDRVEA.

Residues 53 to 292 (HKTYFVHSIR…VARLYLDNFP (240 aa)) form the Radical SAM core domain. Residues cysteine 69, cysteine 73, and cysteine 76 each contribute to the [4Fe-4S] cluster site.

The protein belongs to the radical SAM superfamily. MqnE family. [4Fe-4S] cluster is required as a cofactor.

It carries out the reaction 3-[(1-carboxyvinyl)-oxy]benzoate + S-adenosyl-L-methionine + H2O = 6-amino-6-deoxyfutalosine + hydrogencarbonate + L-methionine + H(+). Its pathway is quinol/quinone metabolism; menaquinone biosynthesis. Its function is as follows. Radical SAM enzyme that catalyzes the addition of the adenosyl radical to the double bond of 3-[(1-carboxyvinyl)oxy]benzoate, leading to aminodeoxyfutalosine (AFL), a key intermediate in the formation of menaquinone (MK, vitamin K2) from chorismate. This chain is Aminodeoxyfutalosine synthase, found in Thermus thermophilus (strain ATCC 27634 / DSM 579 / HB8).